Reading from the N-terminus, the 509-residue chain is ATP synthase subunit alpha (509 aa).

Glycine 169–threonine 176 contacts ATP.

This sequence belongs to the ATPase alpha/beta chains family. F-type ATPases have 2 components, CF(1) - the catalytic core - and CF(0) - the membrane proton channel. CF(1) has five subunits: alpha(3), beta(3), gamma(1), delta(1), epsilon(1). CF(0) has three main subunits: a(1), b(2) and c(9-12). The alpha and beta chains form an alternating ring which encloses part of the gamma chain. CF(1) is attached to CF(0) by a central stalk formed by the gamma and epsilon chains, while a peripheral stalk is formed by the delta and b chains.

The protein resides in the cell inner membrane. It carries out the reaction ATP + H2O + 4 H(+)(in) = ADP + phosphate + 5 H(+)(out). Produces ATP from ADP in the presence of a proton gradient across the membrane. The alpha chain is a regulatory subunit. This Zymomonas mobilis subsp. mobilis (strain ATCC 31821 / ZM4 / CP4) protein is ATP synthase subunit alpha.